The following is a 155-amino-acid chain: Endoribonuclease YbeY (155 aa).

Zn(2+) is bound by residues histidine 114, histidine 118, and histidine 124.

This sequence belongs to the endoribonuclease YbeY family. Zn(2+) serves as cofactor.

Its subcellular location is the cytoplasm. In terms of biological role, single strand-specific metallo-endoribonuclease involved in late-stage 70S ribosome quality control and in maturation of the 3' terminus of the 16S rRNA. In Escherichia coli O1:K1 / APEC, this protein is Endoribonuclease YbeY.